Here is a 273-residue protein sequence, read N- to C-terminus: NAD-dependent protein deacylase (273 aa).

The Deacetylase sirtuin-type domain occupies 20–272; the sequence is RERLRQRIFF…PEFVEKLLKG (253 aa). NAD(+) is bound at residue 48–67; sequence GAGISAESGIRTFRAADGLW. The substrate site is built by tyrosine 92 and arginine 95. Residue 129 to 132 coordinates NAD(+); the sequence is QNID. Histidine 147 functions as the Proton acceptor in the catalytic mechanism. Positions 155 and 174 each coordinate Zn(2+). NAD(+)-binding positions include 214 to 216, 240 to 242, and alanine 258; these read GTS and NLE.

The protein belongs to the sirtuin family. Class III subfamily. Zn(2+) serves as cofactor.

The protein resides in the cytoplasm. The catalysed reaction is N(6)-acetyl-L-lysyl-[protein] + NAD(+) + H2O = 2''-O-acetyl-ADP-D-ribose + nicotinamide + L-lysyl-[protein]. It catalyses the reaction N(6)-succinyl-L-lysyl-[protein] + NAD(+) + H2O = 2''-O-succinyl-ADP-D-ribose + nicotinamide + L-lysyl-[protein]. The enzyme catalyses N(6)-(2-hydroxyisobutanoyl)-L-lysyl-[protein] + NAD(+) + H2O = 2''-O-(2-hydroxyisobutanoyl)-ADP-D-ribose + nicotinamide + L-lysyl-[protein]. NAD-dependent lysine deacetylase that specifically removes acetyl groups on target proteins. Also acts as a protein-lysine deacylase by mediating protein desuccinylation and de-2-hydroxyisobutyrylation. Modulates the activities of several proteins which are inactive in their acylated form. This chain is NAD-dependent protein deacylase, found in Escherichia coli O157:H7.